A 204-amino-acid polypeptide reads, in one-letter code: uncharacterized protein (204 aa).

It is found in the mitochondrion. This is an uncharacterized protein from Arabidopsis thaliana (Mouse-ear cress).